The chain runs to 953 residues: Pyruvate, phosphate dikinase, chloroplastic (953 aa).

The transit peptide at 1–77 (MMSSLSVEGM…VLNPVSPPVT (77 aa)) directs the protein to the chloroplast. The segment at 55–74 (PELRSSGLTPPRAVLNPVSP) is disordered. Phosphothreonine; by PDRP1 is present on Thr-533. The active-site Tele-phosphohistidine intermediate is the His-535. Substrate contacts are provided by Arg-641, Arg-698, Glu-827, Gly-848, Thr-849, Asn-850, and Asp-851. Glu-827 provides a ligand contact to Mg(2+). Asp-851 provides a ligand contact to Mg(2+). Residue Cys-913 is the Proton donor of the active site.

Belongs to the PEP-utilizing enzyme family. In terms of assembly, homotetramer. Mg(2+) serves as cofactor. Post-translationally, phosphorylation of Thr-533 in the dark inactivates the enzyme. Dephosphorylation upon light stimulation reactivates the enzyme.

The protein resides in the plastid. It is found in the chloroplast. The enzyme catalyses pyruvate + phosphate + ATP = phosphoenolpyruvate + AMP + diphosphate + H(+). Its pathway is photosynthesis; C4 acid pathway. Its activity is regulated as follows. Activated by light-induced dephosphorylation. Inhibited by dark-induced phosphorylation. Both reactions are catalyzed by PDRP1. Inactivated by cold due to the dissociation of the homotetramer. Its function is as follows. Formation of phosphoenolpyruvate, which is the primary acceptor of CO(2) in C4 and some Crassulacean acid metabolism plants. This chain is Pyruvate, phosphate dikinase, chloroplastic, found in Flaveria bidentis (Coastal plain yellowtops).